A 1377-amino-acid polypeptide reads, in one-letter code: DNA-directed RNA polymerase subunit beta'' (1377 aa).

4 residues coordinate Zn(2+): Cys224, Cys294, Cys301, and Cys304.

This sequence belongs to the RNA polymerase beta' chain family. RpoC2 subfamily. As to quaternary structure, in plastids the minimal PEP RNA polymerase catalytic core is composed of four subunits: alpha, beta, beta', and beta''. When a (nuclear-encoded) sigma factor is associated with the core the holoenzyme is formed, which can initiate transcription. Zn(2+) is required as a cofactor.

Its subcellular location is the plastid. The protein resides in the chloroplast. The catalysed reaction is RNA(n) + a ribonucleoside 5'-triphosphate = RNA(n+1) + diphosphate. Functionally, DNA-dependent RNA polymerase catalyzes the transcription of DNA into RNA using the four ribonucleoside triphosphates as substrates. The chain is DNA-directed RNA polymerase subunit beta'' from Calycanthus floridus var. glaucus (Eastern sweetshrub).